Reading from the N-terminus, the 279-residue chain is 3-methyl-2-oxobutanoate hydroxymethyltransferase 2 (279 aa).

Mg(2+) is bound by residues aspartate 58 and aspartate 97. Residues 58-59 (DS), aspartate 97, and lysine 126 contribute to the 3-methyl-2-oxobutanoate site. A Mg(2+)-binding site is contributed by glutamate 128. The Proton acceptor role is filled by glutamate 195.

The protein belongs to the PanB family. In terms of assembly, homodecamer; pentamer of dimers. The cofactor is Mg(2+).

The protein resides in the cytoplasm. It carries out the reaction 3-methyl-2-oxobutanoate + (6R)-5,10-methylene-5,6,7,8-tetrahydrofolate + H2O = 2-dehydropantoate + (6S)-5,6,7,8-tetrahydrofolate. Its pathway is cofactor biosynthesis; (R)-pantothenate biosynthesis; (R)-pantoate from 3-methyl-2-oxobutanoate: step 1/2. In terms of biological role, catalyzes the reversible reaction in which hydroxymethyl group from 5,10-methylenetetrahydrofolate is transferred onto alpha-ketoisovalerate to form ketopantoate. In Methylibium petroleiphilum (strain ATCC BAA-1232 / LMG 22953 / PM1), this protein is 3-methyl-2-oxobutanoate hydroxymethyltransferase 2.